Consider the following 336-residue polypeptide: Fructose-1,6-bisphosphatase class 1 (336 aa).

Positions 90, 112, 114, and 115 each coordinate Mg(2+). Substrate contacts are provided by residues 115–118, Asn211, and Lys277; that span reads DGSS. Glu283 serves as a coordination point for Mg(2+).

Belongs to the FBPase class 1 family. In terms of assembly, homotetramer. Requires Mg(2+) as cofactor.

Its subcellular location is the cytoplasm. It catalyses the reaction beta-D-fructose 1,6-bisphosphate + H2O = beta-D-fructose 6-phosphate + phosphate. Its pathway is carbohydrate biosynthesis; gluconeogenesis. This Stutzerimonas stutzeri (strain A1501) (Pseudomonas stutzeri) protein is Fructose-1,6-bisphosphatase class 1.